The sequence spans 225 residues: NAD(P)H-quinone oxidoreductase subunit K, chloroplastic (225 aa).

4 residues coordinate [4Fe-4S] cluster: Cys-43, Cys-44, Cys-108, and Cys-139.

The protein belongs to the complex I 20 kDa subunit family. NDH is composed of at least 16 different subunits, 5 of which are encoded in the nucleus. The cofactor is [4Fe-4S] cluster.

The protein resides in the plastid. It is found in the chloroplast thylakoid membrane. The catalysed reaction is a plastoquinone + NADH + (n+1) H(+)(in) = a plastoquinol + NAD(+) + n H(+)(out). The enzyme catalyses a plastoquinone + NADPH + (n+1) H(+)(in) = a plastoquinol + NADP(+) + n H(+)(out). In terms of biological role, NDH shuttles electrons from NAD(P)H:plastoquinone, via FMN and iron-sulfur (Fe-S) centers, to quinones in the photosynthetic chain and possibly in a chloroplast respiratory chain. The immediate electron acceptor for the enzyme in this species is believed to be plastoquinone. Couples the redox reaction to proton translocation, and thus conserves the redox energy in a proton gradient. The sequence is that of NAD(P)H-quinone oxidoreductase subunit K, chloroplastic from Nuphar advena (Common spatterdock).